The primary structure comprises 314 residues: Cathepsin L 1 (314 aa).

The signal sequence occupies residues 1–24 (MMLLGASLYLNNTQEVSDEIDTAN). Residues 25-109 (LYANWKMKYN…NAANSNFQYK (85 aa)) constitute a propeptide, activation peptide. Cystine bridges form between C132/C175, C166/C207, and C259/C302. C135 is a catalytic residue. Residues H265 and N282 contribute to the active site.

The protein belongs to the peptidase C1 family.

Its subcellular location is the secreted. It carries out the reaction Specificity close to that of papain. As compared to cathepsin B, cathepsin L exhibits higher activity toward protein substrates, but has little activity on Z-Arg-Arg-NHMec, and no peptidyl-dipeptidase activity.. Its function is as follows. May be involved in extracellular digestion. The protein is Cathepsin L 1 of Paramecium tetraurelia.